A 361-amino-acid polypeptide reads, in one-letter code: Probable cadicidin biosynthesis thioesterase (361 aa).

One can recognise a 4Fe-4S ferredoxin-type domain in the interval 2–29 (RVTVDSEQCVGAGQCVLNAPEVFDQDDD). A disordered region spans residues 36-110 (RADPTSGTTR…RRDSPVTTAD (75 aa)). Over residues 46–61 (RSARRATCARRPRSSS) the composition is skewed to basic residues. Composition is skewed to basic and acidic residues over residues 62–74 (RRTE…DRHR) and 94–104 (TDRRQNHRRDS). Residue S201 is part of the active site.

This sequence belongs to the thioesterase family.

The protein operates within antibiotic biosynthesis; candicidin biosynthesis. Functionally, probable thioesterase involved in the biosynthesis of candicidin. Could release the macrolide ring from the polyketide synthase. The sequence is that of Probable cadicidin biosynthesis thioesterase from Streptomyces griseus.